A 547-amino-acid polypeptide reads, in one-letter code: DNA mismatch repair protein MutL (547 aa).

This sequence belongs to the DNA mismatch repair MutL/HexB family.

In terms of biological role, this protein is involved in the repair of mismatches in DNA. It is required for dam-dependent methyl-directed DNA mismatch repair. May act as a 'molecular matchmaker', a protein that promotes the formation of a stable complex between two or more DNA-binding proteins in an ATP-dependent manner without itself being part of a final effector complex. This is DNA mismatch repair protein MutL from Deinococcus radiodurans (strain ATCC 13939 / DSM 20539 / JCM 16871 / CCUG 27074 / LMG 4051 / NBRC 15346 / NCIMB 9279 / VKM B-1422 / R1).